The following is a 257-amino-acid chain: MYNLKNQVIVITGSSSGIGLAASTIALSSGAKVFGVDIRPPPSTLTSQSNYACLQYDLSSSSTVSDIVAACEGAFGPRIDGLLNIAGVMDLNQSADTLADEIWERCIAVNLTAPVKLMREVLPVMQRQGGGSIVNVASKAALSGAVSGVAYTASKHGLVGATKNVAWRFKHERIRCNVVCPGGVGATSIRDGVDVTQFDAAALETMALIHQAHGCDREKGVELQPQDIAHMLLFLLDERSRGVSGAVIPVDNAWSTI.

Residues I11, D57, R119, Y151, K155, and V184 each coordinate NADP(+). Catalysis depends on Y151, which acts as the Proton acceptor. K155 serves as the catalytic Lowers pKa of active site Tyr.

The protein belongs to the short-chain dehydrogenases/reductases (SDR) family.

It participates in secondary metabolite biosynthesis; terpenoid biosynthesis. In terms of biological role, short chain dehydrogenase; part of the gene cluster that mediates the biosynthesis of calidodehydroaustin, a fungal meroterpenoid. The first step of the pathway is the synthesis of 3,5-dimethylorsellinic acid by the polyketide synthase ausA. 3,5-dimethylorsellinic acid is then prenylated by the polyprenyl transferase ausN. Further epoxidation by the FAD-dependent monooxygenase ausM and cyclization by the probable terpene cyclase ausL lead to the formation of protoaustinoid A. Protoaustinoid A is then oxidized to spiro-lactone preaustinoid A3 by the combined action of the FAD-binding monooxygenases ausB and ausC, and the dioxygenase ausE. Acid-catalyzed keto-rearrangement and ring contraction of the tetraketide portion of preaustinoid A3 by ausJ lead to the formation of preaustinoid A4. The aldo-keto reductase ausK, with the help of ausH, is involved in the next step by transforming preaustinoid A4 into isoaustinone which is in turn hydroxylated by the P450 monooxygenase ausI to form austinolide. The cytochrome P450 monooxygenase ausG modifies austinolide to austinol. Austinol is further acetylated to austin by the O-acetyltransferase ausP, which spontaneously changes to dehydroaustin. The cytochrome P450 monooxygenase ausR then converts dehydroaustin is into 7-dehydrodehydroaustin. The hydroxylation catalyzed by ausR permits the O-acetyltransferase ausQ to add an additional acetyl group to the molecule, leading to the formation of acetoxydehydroaustin. The short chain dehydrogenase ausT catalyzes the reduction of the double bond present between carbon atoms 1 and 2 to convert 7-dehydrodehydroaustin into 1,2-dihydro-7-hydroxydehydroaustin. AusQ catalyzes not only an acetylation reaction but also the addition of the PKS ausV diketide product to 1,2-dihydro-7-hydroxydehydroaustin, forming precalidodehydroaustin. Finally, the iron/alpha-ketoglutarate-dependent dioxygenase converts precalidodehydroaustin into calidodehydroaustin. This Aspergillus calidoustus protein is Short chain dehydrogenase ausX.